Consider the following 248-residue polypeptide: Metallo-beta-lactamase type 2 (248 aa).

The signal sequence occupies residues 1–21 (MKGLKGLLVLALGFTGLQVFG). Zn(2+)-binding residues include histidine 97, histidine 99, aspartate 101, histidine 160, and cysteine 179. Lysine 182 contacts substrate. Histidine 221 contributes to the Zn(2+) binding site.

This sequence belongs to the metallo-beta-lactamase superfamily. Class-B beta-lactamase family. Monomer. Zn(2+) serves as cofactor.

The protein localises to the periplasm. The catalysed reaction is a beta-lactam + H2O = a substituted beta-amino acid. Confers resistance to the different beta-lactams antibiotics (penicillin, cephalosporin and carbapenem) via the hydrolysis of the beta-lactam ring. The chain is Metallo-beta-lactamase type 2 (blaB8) from Elizabethkingia meningoseptica (Chryseobacterium meningosepticum).